An 888-amino-acid chain; its full sequence is Serine/arginine repetitive matrix protein 1 (888 aa).

Residues 27-126 (QLKFAECLEK…AGIPTAFLEL (100 aa)) enclose the PWI domain. Basic and acidic residues predominate over residues 139-169 (EKLASMKKQDEDKEKRDKEDKDNREKRDRSR). The disordered stretch occupies residues 139 to 888 (EKLASMKKQD…MRKAQVSPPS (750 aa)). Residues 170–206 (SPRRRKSRSPSPRRRSSPIRRERKRSHSRSPHHRTKS) are compositionally biased toward basic residues. Basic and acidic residues-rich tracts occupy residues 213 to 232 (PEKKEATPEPEPSVKPKETV) and 254 to 276 (ETKEISPERNSKKEREKEKEKTR). Basic residues-rich tracts occupy residues 277–325 (QRSP…RTPP) and 332–347 (PRHRRSRSPVRRRRRS). Low complexity-rich tracts occupy residues 348 to 364 (SASLSGSSSSSSSSRSR) and 473 to 496 (SVQQRRQYRRQNQQSSSDSGSSSS). Composition is skewed to basic residues over residues 528–554 (PRKRQKEPSPRRRRRSPSPPPARRRRS) and 561–585 (PRRRRSPSLPRRRSPSPPPRRRSPS). Residues 586–598 (PRRYSPPIQRRYS) show a composition bias toward low complexity. Basic residues-rich tracts occupy residues 614-629 (PKRRASPSPQSKRRVS) and 642-656 (AKRRSPSISSKHRKG). Positions 662–677 (SNRETRSPPQNKRDSP) are enriched in basic and acidic residues. Low complexity-rich tracts occupy residues 697-712 (ASASPQRRQSPSPSTR), 728-749 (ASTPSPRSARRVSSSRSASGSP), and 763-775 (ARSRSPSANWSPA). Residues 780–790 (SPTQSPSPARN) are compositionally biased toward polar residues. The span at 798-823 (KKKKKKKDKKHKKDKKHKKHKKHKKE) shows a compositional bias: basic residues. Residues 826-843 (AVAAAPAAVAAADTTSAQ) show a composition bias toward low complexity. Basic and acidic residues predominate over residues 866–876 (DLEKHLREKAL).

It belongs to the splicing factor SR family.

It is found in the nucleus. In terms of biological role, involved in pre-mRNA splicing and processing events. In Gallus gallus (Chicken), this protein is Serine/arginine repetitive matrix protein 1 (SRRM1).